Consider the following 362-residue polypeptide: Methylthioribose-1-phosphate isomerase (362 aa).

Substrate-binding positions include 53-55 (RGA), R90, and Q201. Catalysis depends on D242, which acts as the Proton donor. 252–253 (NK) contacts substrate.

This sequence belongs to the eIF-2B alpha/beta/delta subunits family. MtnA subfamily.

It catalyses the reaction 5-(methylsulfanyl)-alpha-D-ribose 1-phosphate = 5-(methylsulfanyl)-D-ribulose 1-phosphate. Its pathway is amino-acid biosynthesis; L-methionine biosynthesis via salvage pathway; L-methionine from S-methyl-5-thio-alpha-D-ribose 1-phosphate: step 1/6. Its function is as follows. Catalyzes the interconversion of methylthioribose-1-phosphate (MTR-1-P) into methylthioribulose-1-phosphate (MTRu-1-P). The chain is Methylthioribose-1-phosphate isomerase from Paramagnetospirillum magneticum (strain ATCC 700264 / AMB-1) (Magnetospirillum magneticum).